The following is a 215-amino-acid chain: Small ribosomal subunit protein uS5 (215 aa).

Positions 1-11 are enriched in polar residues; that stretch reads MTDSSPQSNPN. The tract at residues 1 to 61 is disordered; the sequence is MTDSSPQSNP…GQDRDSEWQE (61 aa). A compositionally biased stretch (low complexity) spans 12-28; it reads AVPGAADVPAAAQGQQQ. Basic and acidic residues predominate over residues 39-61; that stretch reads RGDRRGDRRGGRRGQDRDSEWQE. The S5 DRBM domain maps to 59–122; the sequence is WQERVVQIRR…ADGKKHLVKV (64 aa).

This sequence belongs to the universal ribosomal protein uS5 family. As to quaternary structure, part of the 30S ribosomal subunit. Contacts proteins S4 and S8.

In terms of biological role, with S4 and S12 plays an important role in translational accuracy. Located at the back of the 30S subunit body where it stabilizes the conformation of the head with respect to the body. This Synechococcus sp. (strain CC9902) protein is Small ribosomal subunit protein uS5.